Consider the following 438-residue polypeptide: Glucosamine kinase (438 aa).

ATP is bound by residues K133, 186-188 (AYL), and D193. D300 contributes to the D-glucosamine binding site. Mg(2+)-binding residues include Q305, D317, and D319. The Substrate specificity determinant motif signature appears at 405 to 420 (QEVREYLYAVRHLPHW). A D-glucosamine-binding site is contributed by E409.

It belongs to the actinobacterial glucosamine kinase family. As to quaternary structure, monomer. The cofactor is Mg(2+).

It carries out the reaction D-glucosamine + ATP = D-glucosamine 6-phosphate + ADP + H(+). Catalyzes the ATP-dependent phosphorylation of D-glucosamine (GlcN) to D-glucosamine 6-phosphate. May be involved in the phosphorylation of acquired extracellular GlcN derived from the hydrolysis of chitosan, i.e., in the incorporation of exogenous GlcN into the bacterial GlcNAc metabolism. To a lesser extent, is also active on glucose, but is unable to phosphorylate maltose, 18 other sugars and several aminoglycoside antibiotics. The polypeptide is Glucosamine kinase (Streptacidiphilus jiangxiensis).